The chain runs to 597 residues: Elongation factor 4 (597 aa).

The tr-type G domain occupies 2–184 (KNIRNFSIIA…TIVAKVPAPE (183 aa)). Residues 14–19 (DHGKST) and 131–134 (NKID) each bind GTP.

It belongs to the TRAFAC class translation factor GTPase superfamily. Classic translation factor GTPase family. LepA subfamily.

It localises to the cell inner membrane. It catalyses the reaction GTP + H2O = GDP + phosphate + H(+). Its function is as follows. Required for accurate and efficient protein synthesis under certain stress conditions. May act as a fidelity factor of the translation reaction, by catalyzing a one-codon backward translocation of tRNAs on improperly translocated ribosomes. Back-translocation proceeds from a post-translocation (POST) complex to a pre-translocation (PRE) complex, thus giving elongation factor G a second chance to translocate the tRNAs correctly. Binds to ribosomes in a GTP-dependent manner. The chain is Elongation factor 4 from Francisella tularensis subsp. mediasiatica (strain FSC147).